Here is a 547-residue protein sequence, read N- to C-terminus: Glucose-6-phosphate isomerase (547 aa).

Catalysis depends on Glu-352, which acts as the Proton donor. Residues His-383 and Lys-511 contribute to the active site.

Belongs to the GPI family.

The protein localises to the cytoplasm. It carries out the reaction alpha-D-glucose 6-phosphate = beta-D-fructose 6-phosphate. Its pathway is carbohydrate biosynthesis; gluconeogenesis. It functions in the pathway carbohydrate degradation; glycolysis; D-glyceraldehyde 3-phosphate and glycerone phosphate from D-glucose: step 2/4. Catalyzes the reversible isomerization of glucose-6-phosphate to fructose-6-phosphate. This is Glucose-6-phosphate isomerase from Rhodospirillum rubrum (strain ATCC 11170 / ATH 1.1.1 / DSM 467 / LMG 4362 / NCIMB 8255 / S1).